The primary structure comprises 337 residues: MLSEASDFNSSGSRSEGSVFSRTEHSVIAAYLIVAGITSILSNVVVLGIFIKYKELRTPTNAVIINLAFTDIGVSSIGYPMSAASDLHGSWKFGHAGCQIYAGLNIFFGMVSIGLLTVVAMDRYLTISCPDVGRRMTTNTYLSMILGAWINGLFWALMPIIGWASYAPDPTGATCTINWRNNDTSFVSYTMMVIVVNFIVPLTVMFYCYYHVSRSLRLYAASDCTAHLHRDWADQADVTKMSVIMILMFLLAWSPYSIVCLWACFGNPKKIPPSMAIIAPLFAKSSTFYNPCIYVAAHKKFRKAMLAMFKCQPHLAVPEPSTLPMDMPQSSLAPVRI.

Over 1–26 (MLSEASDFNSSGSRSEGSVFSRTEHS) the chain is Extracellular. N-linked (GlcNAc...) asparagine glycosylation occurs at N9. A helical membrane pass occupies residues 27-49 (VIAAYLIVAGITSILSNVVVLGI). The Cytoplasmic segment spans residues 50-61 (FIKYKELRTPTN). A helical transmembrane segment spans residues 62–87 (AVIINLAFTDIGVSSIGYPMSAASDL). Residues 88–101 (HGSWKFGHAGCQIY) are Extracellular-facing. C98 and C175 are disulfide-bonded. A helical transmembrane segment spans residues 102–121 (AGLNIFFGMVSIGLLTVVAM). Residues 122-140 (DRYLTISCPDVGRRMTTNT) lie on the Cytoplasmic side of the membrane. The helical transmembrane segment at 141–164 (YLSMILGAWINGLFWALMPIIGWA) threads the bilayer. Residues 165 to 188 (SYAPDPTGATCTINWRNNDTSFVS) are Extracellular-facing. N-linked (GlcNAc...) asparagine glycosylation occurs at N182. A helical membrane pass occupies residues 189-212 (YTMMVIVVNFIVPLTVMFYCYYHV). Over 213-240 (SRSLRLYAASDCTAHLHRDWADQADVTK) the chain is Cytoplasmic. Residues 241–264 (MSVIMILMFLLAWSPYSIVCLWAC) traverse the membrane as a helical segment. At 265 to 272 (FGNPKKIP) the chain is on the extracellular side. A helical membrane pass occupies residues 273–297 (PSMAIIAPLFAKSSTFYNPCIYVAA). The residue at position 284 (K284) is an N6-(retinylidene)lysine. Residues 298-337 (HKKFRKAMLAMFKCQPHLAVPEPSTLPMDMPQSSLAPVRI) are Cytoplasmic-facing.

The protein belongs to the G-protein coupled receptor 1 family. Opsin subfamily. Found only in the eye, where it is localized to the retinal pigment epithelium (RPE). In the RPE, it is localized to the microvilli that surround the photoreceptor outer segments.

It localises to the membrane. Functionally, may play a role in rpe physiology either by detecting light directly or by monitoring the concentration of retinoids or other photoreceptor-derived compounds. The protein is Visual pigment-like receptor peropsin (Rrh) of Mus musculus (Mouse).